A 29-amino-acid polypeptide reads, in one-letter code: GCKLTFWKCKNKKECCGWNACALGICMPR.

3 disulfide bridges follow: Cys-2/Cys-16, Cys-9/Cys-21, and Cys-15/Cys-26.

This sequence belongs to the neurotoxin 15 family. 01 (magi-5) subfamily. As to expression, expressed by the venom gland.

It is found in the secreted. In terms of biological role, insect and vertebrate active toxin. Binds at site 4 of mammalian voltage-gated sodium channels and shifts the activation voltage of the mammalian rNav1.2a (SCN2A) channel to more hyperpolarized voltages, whereas the insect channel, DmNav1 (para), is not affected. Causes temporary paralysis when injected into lepidopteran larvae at 8.6 nmol/g. A low intracranial injection dose into mice causes lacrimation, closure of the eyes and sweating. A high injection dose causes extensive lacrimation and death. The chain is Beta-hexatoxin-Mr1a from Macrothele raveni (Funnel-web spider).